A 608-amino-acid chain; its full sequence is UvrABC system protein C (608 aa).

The region spanning 18–96 (NQPGVYRMYN…IKKYKPRYNV (79 aa)) is the GIY-YIG domain. The 36-residue stretch at 206–241 (KQVIDSLVQHMERASTDLRFEAAARYRDQISALNKV) folds into the UVR domain.

The protein belongs to the UvrC family. Interacts with UvrB in an incision complex.

It localises to the cytoplasm. The UvrABC repair system catalyzes the recognition and processing of DNA lesions. UvrC both incises the 5' and 3' sides of the lesion. The N-terminal half is responsible for the 3' incision and the C-terminal half is responsible for the 5' incision. The chain is UvrABC system protein C from Pseudoalteromonas atlantica (strain T6c / ATCC BAA-1087).